A 125-amino-acid polypeptide reads, in one-letter code: MRKNDFDVREMNAALGILKLAREGRGDSDEPDTRTRKTTFQMMVLKEVFKIAPHPSTLTKADLALMIKLPLKAVQIWFQNERSRKERGGRLGKRTRGGKSESIDPVRLFKVIMKVLEKNREGLGF.

Positions 30 to 89 form a DNA-binding region, homeobox; that stretch reads EPDTRTRKTTFQMMVLKEVFKIAPHPSTLTKADLALMIKLPLKAVQIWFQNERSRKERGG.

It is found in the nucleus. This Encephalitozoon cuniculi (strain GB-M1) (Microsporidian parasite) protein is Homeobox protein HD-8 (HD-8).